The chain runs to 739 residues: Ankyrin repeat and SAM domain-containing protein 6 (739 aa).

8 ANK repeats span residues Met1 to Asp30, Leu57 to Val86, Thr91 to His120, Leu124 to Asp156, Lys158 to Val188, Asp192 to Arg221, His226 to Leu255, and Asn259 to Lys290. The segment covering Gln295–Ala305 has biased composition (basic residues). Disordered stretches follow at residues Gln295–Lys320 and Leu449–Glu645. Over residues Pro462–Val478 the composition is skewed to polar residues. Low complexity-rich tracts occupy residues Gly490–Gly506 and Ser582–Leu592. The span at Thr593–Thr603 shows a compositional bias: pro residues. The segment covering Pro604–Thr641 has biased composition (low complexity). Residues Thr643–Gly706 form the SAM domain.

It is found in the cell projection. Its subcellular location is the cilium. Its function is as follows. Required for renal function. The protein is Ankyrin repeat and SAM domain-containing protein 6 (anks6) of Danio rerio (Zebrafish).